Consider the following 374-residue polypeptide: N-acetyldiaminopimelate deacetylase (374 aa).

Aspartate 69 is an active-site residue. Glutamate 128 serves as the catalytic Proton acceptor.

This sequence belongs to the peptidase M20A family. N-acetyldiaminopimelate deacetylase subfamily.

The catalysed reaction is N-acetyl-(2S,6S)-2,6-diaminopimelate + H2O = (2S,6S)-2,6-diaminopimelate + acetate. It functions in the pathway amino-acid biosynthesis; L-lysine biosynthesis via DAP pathway; LL-2,6-diaminopimelate from (S)-tetrahydrodipicolinate (acetylase route): step 3/3. Catalyzes the conversion of N-acetyl-diaminopimelate to diaminopimelate and acetate. This is N-acetyldiaminopimelate deacetylase from Bacillus licheniformis (strain ATCC 14580 / DSM 13 / JCM 2505 / CCUG 7422 / NBRC 12200 / NCIMB 9375 / NCTC 10341 / NRRL NRS-1264 / Gibson 46).